A 127-amino-acid chain; its full sequence is Anti-adapter protein IraD (127 aa).

Belongs to the GpW/Gp25 family. IraD subfamily. As to quaternary structure, interacts with RssB.

It is found in the cytoplasm. In terms of biological role, inhibits RpoS proteolysis by regulating RssB activity, thereby increasing the stability of the sigma stress factor RpoS during oxidative stress. Its effect on RpoS stability is due to its interaction with RssB, which probably blocks the interaction of RssB with RpoS, and the consequent delivery of the RssB-RpoS complex to the ClpXP protein degradation pathway. The sequence is that of Anti-adapter protein IraD from Escherichia coli O6:H1 (strain CFT073 / ATCC 700928 / UPEC).